Consider the following 130-residue polypeptide: Small ribosomal subunit protein uS8 (130 aa).

This sequence belongs to the universal ribosomal protein uS8 family. As to quaternary structure, part of the 30S ribosomal subunit. Contacts proteins S5 and S12.

One of the primary rRNA binding proteins, it binds directly to 16S rRNA central domain where it helps coordinate assembly of the platform of the 30S subunit. This is Small ribosomal subunit protein uS8 from Pseudoalteromonas translucida (strain TAC 125).